Here is a 616-residue protein sequence, read N- to C-terminus: D-glutamate cyclase, mitochondrial (616 aa).

The N-terminal 28 residues, 1–28 (MPFTLHLRSRLPSAIRSLILQKKPNIRN), are a transit peptide targeting the mitochondrion.

This sequence belongs to the D-glutamate cyclase family.

It is found in the mitochondrion matrix. The enzyme catalyses D-glutamate = 5-oxo-D-proline + H2O. Functionally, D-glutamate cyclase that converts D-glutamate to 5-oxo-D-proline. This Homo sapiens (Human) protein is D-glutamate cyclase, mitochondrial.